The following is a 369-amino-acid chain: F-box protein At3g08750 (369 aa).

In terms of domain architecture, F-box spans 6–53 (CLLLPSLPFELIEEILYKIPAESLIRFKSTCKKWYNLITEKRFMYNHL).

The sequence is that of F-box protein At3g08750 from Arabidopsis thaliana (Mouse-ear cress).